We begin with the raw amino-acid sequence, 315 residues long: HVA22-like protein h (315 aa).

Residues 148-315 (PKPKPKEKKQ…RKARSAGAPR (168 aa)) are disordered. The span at 173–190 (ATSQAASSNPQVRLQSKK) shows a compositional bias: polar residues. Residues 234–248 (PPGPPPPPPPPPPSP) are compositionally biased toward pro residues.

The protein belongs to the DP1 family.

This chain is HVA22-like protein h (HVA22H), found in Arabidopsis thaliana (Mouse-ear cress).